Here is a 377-residue protein sequence, read N- to C-terminus: 3-(aryl)acrylate reductase (377 aa).

FAD contacts are provided by residues Phe121–Ser130, Phe154–Thr156, Arg266, Gln277, and Gln334–Gly338. Residue Glu361 is the Proton acceptor of the active site. Position 363–365 (Thr363–Glu365) interacts with FAD.

This sequence belongs to the acyl-CoA dehydrogenase family. FAD serves as cofactor.

The catalysed reaction is 3-phenylpropanoate + oxidized [electron-transfer flavoprotein] + H(+) = (E)-cinnamate + reduced [electron-transfer flavoprotein]. It carries out the reaction phloretate + oxidized [electron-transfer flavoprotein] + H(+) = (E)-4-coumarate + reduced [electron-transfer flavoprotein]. It catalyses the reaction indole-3-propanoate + oxidized [electron-transfer flavoprotein] + H(+) = (E)-3-(indol-3-yl)acrylate + reduced [electron-transfer flavoprotein]. It functions in the pathway amino-acid degradation. Functionally, essential for the reductive metabolism of L-phenylalanine, L-tyrosine and L-tryptophan. Catalyzes the reduction of phenylacrylic acid to phenylpropionic acid, 4-hydroxy-phenylacrylic acid to 4-hydroxy-phenylpropionic acid, and indoleacrylic acid to indolepropionic acid. This Clostridium sporogenes (strain ATCC 15579) protein is 3-(aryl)acrylate reductase.